The sequence spans 546 residues: ATP synthase subunit alpha (546 aa).

172 to 179 (GDRKTGKT) contributes to the ATP binding site. Composition is skewed to polar residues over residues 511–520 (FRTTEGNNLG) and 536–546 (TELNVSRKTAK). A disordered region spans residues 511–546 (FRTTEGNNLGTEAPVDPLAADDVNKTELNVSRKTAK).

Belongs to the ATPase alpha/beta chains family. F-type ATPases have 2 components, CF(1) - the catalytic core - and CF(0) - the membrane proton channel. CF(1) has five subunits: alpha(3), beta(3), gamma(1), delta(1), epsilon(1). CF(0) has three main subunits: a(1), b(2) and c(9-12). The alpha and beta chains form an alternating ring which encloses part of the gamma chain. CF(1) is attached to CF(0) by a central stalk formed by the gamma and epsilon chains, while a peripheral stalk is formed by the delta and b chains.

The protein resides in the cell membrane. It catalyses the reaction ATP + H2O + 4 H(+)(in) = ADP + phosphate + 5 H(+)(out). Its function is as follows. Produces ATP from ADP in the presence of a proton gradient across the membrane. The alpha chain is a regulatory subunit. In Corynebacterium aurimucosum (strain ATCC 700975 / DSM 44827 / CIP 107346 / CN-1) (Corynebacterium nigricans), this protein is ATP synthase subunit alpha.